A 387-amino-acid polypeptide reads, in one-letter code: Zn(2)-C6 fungal-type trascription factor aoiH (387 aa).

The segment at residues 21-48 is a DNA-binding region (zn(2)-C6 fungal-type); that stretch reads CDFCALSKVKCDRGQPQCVRCIKSGIDC. Residues 68-87 are compositionally biased toward polar residues; that stretch reads VRSTSATTQGTRRKQQTIAQ. The disordered stretch occupies residues 68-94; the sequence is VRSTSATTQGTRRKQQTIAQHSPRRRI.

Its subcellular location is the nucleus. Transcription factor; part of the gene cluster that mediates the biosynthesis of a methylated derivative of known natural products orthosporin and diaporthin. Positively regultaes the expression of the non-reducing polyketide synthase aoiG and the O-methyltransferase aoiO. The protein is Zn(2)-C6 fungal-type trascription factor aoiH of Aspergillus oryzae (strain ATCC 42149 / RIB 40) (Yellow koji mold).